The following is a 187-amino-acid chain: Ribosome-recycling factor (187 aa).

The protein belongs to the RRF family.

Its subcellular location is the cytoplasm. Its function is as follows. Responsible for the release of ribosomes from messenger RNA at the termination of protein biosynthesis. May increase the efficiency of translation by recycling ribosomes from one round of translation to another. The chain is Ribosome-recycling factor from Rhodopseudomonas palustris (strain BisA53).